Consider the following 274-residue polypeptide: Thiazole synthase (274 aa).

Lys111 functions as the Schiff-base intermediate with DXP in the catalytic mechanism. 1-deoxy-D-xylulose 5-phosphate-binding positions include Gly172, 198–199, and 220–221; these read AG and NS. The segment at 251 to 274 is disordered; sequence RLPERAAASPSSPTTGIIAEAKTK.

The protein belongs to the ThiG family. In terms of assembly, homotetramer. Forms heterodimers with either ThiH or ThiS.

The protein resides in the cytoplasm. It catalyses the reaction [ThiS sulfur-carrier protein]-C-terminal-Gly-aminoethanethioate + 2-iminoacetate + 1-deoxy-D-xylulose 5-phosphate = [ThiS sulfur-carrier protein]-C-terminal Gly-Gly + 2-[(2R,5Z)-2-carboxy-4-methylthiazol-5(2H)-ylidene]ethyl phosphate + 2 H2O + H(+). Its pathway is cofactor biosynthesis; thiamine diphosphate biosynthesis. Its function is as follows. Catalyzes the rearrangement of 1-deoxy-D-xylulose 5-phosphate (DXP) to produce the thiazole phosphate moiety of thiamine. Sulfur is provided by the thiocarboxylate moiety of the carrier protein ThiS. In vitro, sulfur can be provided by H(2)S. This chain is Thiazole synthase, found in Prochlorococcus marinus (strain MIT 9313).